The chain runs to 330 residues: D-alanine--D-alanine ligase (330 aa).

In terms of domain architecture, ATP-grasp spans 120-326 (KLWYDALGIP…FKTFLQKAVL (207 aa)). 150–205 (AFKQWGGLFVKAACQGSSVGCYKVTSEEELAQAINGAFGYSQQVLVEKAVKPRELE) is an ATP binding site. Mg(2+) contacts are provided by Asp280, Glu293, and Asn295.

It belongs to the D-alanine--D-alanine ligase family. Requires Mg(2+) as cofactor. It depends on Mn(2+) as a cofactor.

It localises to the cytoplasm. It carries out the reaction 2 D-alanine + ATP = D-alanyl-D-alanine + ADP + phosphate + H(+). It functions in the pathway cell wall biogenesis; peptidoglycan biosynthesis. Cell wall formation. The protein is D-alanine--D-alanine ligase of Aliivibrio fischeri (strain MJ11) (Vibrio fischeri).